Here is a 120-residue protein sequence, read N- to C-terminus: cAMP-responsive element-binding protein-like 2 (120 aa).

Positions 1–24 (MDDSKVVGGKVKKPGKRGRKPAKI) are disordered. Positions 10–21 (KVKKPGKRGRKP) are enriched in basic residues. The 64-residue stretch at 23–86 (KIDLKAKLER…MAMDQGKIPS (64 aa)) folds into the bZIP domain. Positions 29-60 (KLERSRQSARECRARKKLRYQYLEELVSSRER) are basic motif. The tract at residues 62–69 (ICALREEL) is leucine-zipper. The tract at residues 93–120 (TGEEQNKSQQNSSRHTKAGKTDANSNSW) is disordered.

The protein belongs to the bZIP family. ATF subfamily. As to quaternary structure, interacts with CREB1; regulates CREB1 phosphorylation, stability and transcriptional activity. In terms of processing, phosphorylated by AMPK.

The protein localises to the nucleus. Probable regulator of CREB1 transcriptional activity which is involved in adipose cells differentiation. May also play a regulatory role in the cell cycle. Identification in a chromosomal region frequently deleted in various cancers suggests that it might act as a tumor suppressor. The sequence is that of cAMP-responsive element-binding protein-like 2 (CREBL2) from Homo sapiens (Human).